Reading from the N-terminus, the 202-residue chain is Holliday junction branch migration complex subunit RuvA (202 aa).

Positions 1-62 are domain I; the sequence is MYEYLHGLIT…DTAQTLYGFS (62 aa). Residues 63–141 are domain II; the sequence is DFAEKQLFLK…DLAPATDDNT (79 aa). Residues 142–151 are flexible linker; sequence LFTPEVAPTT. Positions 152–202 are domain III; the sequence is TENPQLADALAALTALGYRETAVKKITAQLRQFNGQTTNDYLSEGLRLLTK.

Belongs to the RuvA family. As to quaternary structure, homotetramer. Forms an RuvA(8)-RuvB(12)-Holliday junction (HJ) complex. HJ DNA is sandwiched between 2 RuvA tetramers; dsDNA enters through RuvA and exits via RuvB. An RuvB hexamer assembles on each DNA strand where it exits the tetramer. Each RuvB hexamer is contacted by two RuvA subunits (via domain III) on 2 adjacent RuvB subunits; this complex drives branch migration. In the full resolvosome a probable DNA-RuvA(4)-RuvB(12)-RuvC(2) complex forms which resolves the HJ.

Its subcellular location is the cytoplasm. Its function is as follows. The RuvA-RuvB-RuvC complex processes Holliday junction (HJ) DNA during genetic recombination and DNA repair, while the RuvA-RuvB complex plays an important role in the rescue of blocked DNA replication forks via replication fork reversal (RFR). RuvA specifically binds to HJ cruciform DNA, conferring on it an open structure. The RuvB hexamer acts as an ATP-dependent pump, pulling dsDNA into and through the RuvAB complex. HJ branch migration allows RuvC to scan DNA until it finds its consensus sequence, where it cleaves and resolves the cruciform DNA. This chain is Holliday junction branch migration complex subunit RuvA, found in Levilactobacillus brevis (strain ATCC 367 / BCRC 12310 / CIP 105137 / JCM 1170 / LMG 11437 / NCIMB 947 / NCTC 947) (Lactobacillus brevis).